We begin with the raw amino-acid sequence, 354 residues long: Holliday junction branch migration complex subunit RuvB (354 aa).

The segment at 4 to 198 is large ATPase domain (RuvB-L); sequence TTDYGASNTG…FGFTAHLDFY (195 aa). ATP contacts are provided by residues leucine 37, arginine 38, glycine 79, lysine 82, threonine 83, threonine 84, 145 to 147, arginine 188, tyrosine 198, and arginine 235; that span reads EDF. Mg(2+) is bound at residue threonine 83. Residues 199–269 form a small ATPAse domain (RuvB-S) region; that stretch reads PHEELEKLIE…DVKEALALYQ (71 aa). Residues 272-354 are head domain (RuvB-H); that stretch reads SEGLDRLDIA…TPKDDVSKLF (83 aa). DNA contacts are provided by arginine 327 and arginine 332.

This sequence belongs to the RuvB family. Homohexamer. Forms an RuvA(8)-RuvB(12)-Holliday junction (HJ) complex. HJ DNA is sandwiched between 2 RuvA tetramers; dsDNA enters through RuvA and exits via RuvB. An RuvB hexamer assembles on each DNA strand where it exits the tetramer. Each RuvB hexamer is contacted by two RuvA subunits (via domain III) on 2 adjacent RuvB subunits; this complex drives branch migration. In the full resolvosome a probable DNA-RuvA(4)-RuvB(12)-RuvC(2) complex forms which resolves the HJ.

It is found in the cytoplasm. The catalysed reaction is ATP + H2O = ADP + phosphate + H(+). Functionally, the RuvA-RuvB-RuvC complex processes Holliday junction (HJ) DNA during genetic recombination and DNA repair, while the RuvA-RuvB complex plays an important role in the rescue of blocked DNA replication forks via replication fork reversal (RFR). RuvA specifically binds to HJ cruciform DNA, conferring on it an open structure. The RuvB hexamer acts as an ATP-dependent pump, pulling dsDNA into and through the RuvAB complex. RuvB forms 2 homohexamers on either side of HJ DNA bound by 1 or 2 RuvA tetramers; 4 subunits per hexamer contact DNA at a time. Coordinated motions by a converter formed by DNA-disengaged RuvB subunits stimulates ATP hydrolysis and nucleotide exchange. Immobilization of the converter enables RuvB to convert the ATP-contained energy into a lever motion, pulling 2 nucleotides of DNA out of the RuvA tetramer per ATP hydrolyzed, thus driving DNA branch migration. The RuvB motors rotate together with the DNA substrate, which together with the progressing nucleotide cycle form the mechanistic basis for DNA recombination by continuous HJ branch migration. Branch migration allows RuvC to scan DNA until it finds its consensus sequence, where it cleaves and resolves cruciform DNA. This is Holliday junction branch migration complex subunit RuvB from Bifidobacterium longum (strain NCC 2705).